The chain runs to 254 residues: MWQLLLPTALLLLVSAGMRAEDLPKAVVFLEPQWYRVLEKDSVTLKCQGAYSPEDNSTRWFHNESLISSQTSSYFIAAARVNNSGEYRCQTSLSTLSDPVQLEVHIGWLLLQAPRWVFKEEDSIHLRCHSWKNTLLHKVTYLQNGKGRKYFHQNSDFYIPKATLKDSGSYFCRGLIGSKNVSSETVNITITQDLAVSSISSFFPPGYQVSFCLVMVLLFAVDTGLYFSVKKSIPSSTSDWKDHKFKWSKDPQDK.

Residues methionine 1–alanine 20 form the signal peptide. 2 consecutive Ig-like C2-type domains span residues proline 24–histidine 105 and glycine 107–threonine 189. Cystine bridges form between cysteine 47–cysteine 89 and cysteine 128–cysteine 172. N-linked (GlcNAc...) asparagine glycosylation occurs at asparagine 187. Residues tyrosine 207–valine 229 form a helical membrane-spanning segment. The segment at proline 234–lysine 254 is disordered. Residues aspartate 239–lysine 254 show a composition bias toward basic and acidic residues.

In terms of assembly, forms a heterooligomeric complex with ITAM-containing signaling subunits, either a homodimer of CD247, a homodimer of FCER1G or a heterodimer of CD247 and FCER1G, to form a functional receptor complex. Interacts (via transmembrane domain) with signaling subunits; this interaction is a prerequisite for receptor complex expression on the cell surface and intracellular signal transduction. Binds the Fc region of antigen-complexed IgG with a preference for IgG1 and IgG3 isotypes. Interacts with CD2; this interaction is involved in NK cell activation and cytotoxicity. Interacts with S100A4; this interaction inhibits PKC-dependent phosphorylation of FCGR3A. Glycosylated. Glycosylation plays an inhibitory role in the interaction with IgG1 and IgG2. In terms of processing, undergoes rapid ectodomain shedding upon NK cell stimulation. The soluble form is produced by a proteolytic cleavage mediated by ADAM17. Repeated stimulation causes receptor shedding, a mechanism that allows for increased NK cell motility and detachment from opsonized target cells while avoiding activation-induced NK cell apoptosis. As to expression, lymphocytes and monocytes.

It is found in the cell membrane. It localises to the secreted. Receptor for the invariable Fc fragment of immunoglobulin gamma (IgG). Optimally activated upon binding of clustered antigen-IgG complexes displayed on cell surfaces, triggers lysis of antibody-coated cells, a process known as antibody-dependent cellular cytotoxicity (ADCC). Does not bind free monomeric IgG, thus avoiding inappropriate effector cell activation in the absence of antigenic trigger. Mediates IgG effector functions on natural killer (NK) cells. Binds antigen-IgG complexes generated upon infection and triggers NK cell-dependent cytokine production and degranulation to limit viral load and propagation. Involved in the generation of memory-like adaptive NK cells capable to produce high amounts of IFNG and to efficiently eliminate virus-infected cells via ADCC. Regulates NK cell survival and proliferation, in particular by preventing NK cell progenitor apoptosis. Fc-binding subunit that associates with CD247 and/or FCER1G adapters to form functional signaling complexes. Following the engagement of antigen-IgG complexes, triggers phosphorylation of immunoreceptor tyrosine-based activation motif (ITAM)-containing adapters with subsequent activation of phosphatidylinositol 3-kinase signaling and sustained elevation of intracellular calcium that ultimately drive NK cell activation. The ITAM-dependent signaling coupled to receptor phosphorylation by PKC mediates robust intracellular calcium flux that leads to production of pro-inflammatory cytokines, whereas in the absence of receptor phosphorylation it mainly activates phosphatidylinositol 3-kinase signaling leading to cell degranulation. Costimulates NK cells and trigger lysis of target cells independently of IgG binding. Mediates the antitumor activities of therapeutic antibodies. Upon ligation on monocytes triggers TNFA-dependent ADCC of IgG-coated tumor cells. Mediates enhanced ADCC in response to afucosylated IgGs. In Papio anubis (Olive baboon), this protein is Low affinity immunoglobulin gamma Fc region receptor III-A (FCGR3A).